The sequence spans 335 residues: Dipeptide transport ATP-binding protein DppD (335 aa).

The 250-residue stretch at 7 to 256 (VQNLHVSFTT…PQHPYTKGLL (250 aa)) folds into the ABC transporter domain. 41 to 48 (GESGCGKS) provides a ligand contact to ATP.

Belongs to the ABC transporter superfamily.

It localises to the cell membrane. The enzyme catalyses a dipeptide(out) + ATP + H2O = a dipeptide(in) + ADP + phosphate + H(+). Probably part of the ABC transporter DppBCDE involved in dipeptide transport. Responsible for energy coupling to the transport system. This is Dipeptide transport ATP-binding protein DppD (dppD) from Bacillus subtilis (strain 168).